Consider the following 223-residue polypeptide: Phosphoribosylformylglycinamidine synthase subunit PurQ (223 aa).

One can recognise a Glutamine amidotransferase type-1 domain in the interval 3-223; that stretch reads SAVILLPGLN…LFAGALGITA (221 aa). C87 (nucleophile) is an active-site residue. Active-site residues include H197 and E199.

As to quaternary structure, part of the FGAM synthase complex composed of 1 PurL, 1 PurQ and 2 PurS subunits.

The protein resides in the cytoplasm. It catalyses the reaction N(2)-formyl-N(1)-(5-phospho-beta-D-ribosyl)glycinamide + L-glutamine + ATP + H2O = 2-formamido-N(1)-(5-O-phospho-beta-D-ribosyl)acetamidine + L-glutamate + ADP + phosphate + H(+). The catalysed reaction is L-glutamine + H2O = L-glutamate + NH4(+). The protein operates within purine metabolism; IMP biosynthesis via de novo pathway; 5-amino-1-(5-phospho-D-ribosyl)imidazole from N(2)-formyl-N(1)-(5-phospho-D-ribosyl)glycinamide: step 1/2. Part of the phosphoribosylformylglycinamidine synthase complex involved in the purines biosynthetic pathway. Catalyzes the ATP-dependent conversion of formylglycinamide ribonucleotide (FGAR) and glutamine to yield formylglycinamidine ribonucleotide (FGAM) and glutamate. The FGAM synthase complex is composed of three subunits. PurQ produces an ammonia molecule by converting glutamine to glutamate. PurL transfers the ammonia molecule to FGAR to form FGAM in an ATP-dependent manner. PurS interacts with PurQ and PurL and is thought to assist in the transfer of the ammonia molecule from PurQ to PurL. The chain is Phosphoribosylformylglycinamidine synthase subunit PurQ from Brucella abortus biovar 1 (strain 9-941).